The chain runs to 551 residues: Rqc2 homolog RqcH (551 aa).

It belongs to the NEMF family. As to quaternary structure, associates with stalled 50S ribosomal subunits, binds to RqcP. Interacts with human fibronectin.

Its subcellular location is the secreted. It localises to the capsule. It is found in the cell surface. The protein resides in the cytoplasm. Key component of the ribosome quality control system (RQC), a ribosome-associated complex that mediates the extraction of incompletely synthesized nascent chains from stalled ribosomes and their subsequent degradation. RqcH recruits Ala-charged tRNA, and with RqcP directs the elongation of stalled nascent chains on 50S ribosomal subunits, leading to non-templated C-terminal alanine extensions (Ala tail). The Ala tail promotes nascent chain degradation. May add between 1 and at least 8 Ala residues. Binds to stalled 50S ribosomal subunits. Functionally, plays a significant role in virulence. Recombinant protein binds to immobilized human fibronectin; binding is saturable and competed by heparin. Purified protein inhibits binding of whole cells to fibronectin. The chain is Rqc2 homolog RqcH from Streptococcus pneumoniae serotype 2 (strain D39 / NCTC 7466).